Here is a 104-residue protein sequence, read N- to C-terminus: Protein S100-A14 (104 aa).

The EF-hand domain occupies 27 to 61 (KNFHQYSVEGGKETLTPSELRDLVTQQLPHLMPSN).

Belongs to the S-100 family. Homodimer. Interacts with AGER. As to expression, expressed at highest levels in colon and at moderate levels in thymus, kidney, liver, small intestine, and lung. Low expression in heart and no expression is seen in brain, skeletal muscle, spleen, placenta and peripheral blood leukocytes.

The protein localises to the cytoplasm. Modulates P53/TP53 protein levels, and thereby plays a role in the regulation of cell survival and apoptosis. Depending on the context, it can promote cell proliferation or apoptosis. Plays a role in the regulation of cell migration by modulating the levels of MMP2, a matrix protease that is under transcriptional control of P53/TP53. Does not bind calcium. The sequence is that of Protein S100-A14 (S100A14) from Homo sapiens (Human).